The following is a 284-amino-acid chain: Putative ribosome biogenesis protein C306.07c (284 aa).

Residues Leu264–Lys284 form a disordered region.

The protein belongs to the universal ribosomal protein uL1 family. Highly divergent. As to quaternary structure, component of the 90S pre-ribosomes.

The protein localises to the nucleus. It is found in the nucleolus. Involved in rRNA-processing and ribosome biosynthesis. This is Putative ribosome biogenesis protein C306.07c from Schizosaccharomyces pombe (strain 972 / ATCC 24843) (Fission yeast).